Here is a 368-residue protein sequence, read N- to C-terminus: F-box protein At3g17710 (368 aa).

The region spanning 1 to 46 (MASVKLPWDLEEEILSRLPPRSLVRFRTVCKHWNGLFSDKRFVKKH) is the F-box domain.

The polypeptide is F-box protein At3g17710 (Arabidopsis thaliana (Mouse-ear cress)).